Consider the following 278-residue polypeptide: uncharacterized protein (278 aa).

In terms of domain architecture, Response regulatory spans 1–55; the sequence is MKIRERFSMVDLPVLIITAAIIGHDKYKAFHAGANDILQKPYHYSEFMARIQNLI.

This is an uncharacterized protein from Bacillus subtilis (strain 168).